The primary structure comprises 719 residues: B3 domain-containing protein Os03g0120900 (719 aa).

A DNA-binding region (TF-B3) is located at residues 7-110; it reads HHHFIKVMVG…HFMVLPFGLN (104 aa). 2 disordered regions span residues 328–381 and 412–443; these read RGSF…RSEQ and EEPQHNQGENEGNLDQVNNKETDEEQIERNAV. Basic and acidic residues predominate over residues 351 to 366; the sequence is DSAENTLKERSEERQP. The span at 416 to 430 shows a compositional bias: polar residues; it reads HNQGENEGNLDQVNN.

It is found in the nucleus. This is B3 domain-containing protein Os03g0120900 from Oryza sativa subsp. japonica (Rice).